The chain runs to 20 residues: Cruzioseptin-15 (20 aa).

In terms of tissue distribution, expressed by the skin glands.

It localises to the secreted. Its function is as follows. Has antimicrobial activity. In Cruziohyla calcarifer (Splendid leaf frog), this protein is Cruzioseptin-15.